A 238-amino-acid chain; its full sequence is Probable transcriptional regulatory protein LACR_0237 (238 aa).

The protein belongs to the TACO1 family. YeeN subfamily.

It localises to the cytoplasm. This chain is Probable transcriptional regulatory protein LACR_0237, found in Lactococcus lactis subsp. cremoris (strain SK11).